The chain runs to 415 residues: Neuromedin-U receptor 2 (415 aa).

Residues 1–49 lie on the Extracellular side of the membrane; sequence MSGMEKLQNASWIYQQKLEDPFQKHLNSTEEYLAFLCGPRRSHFFLPVS. N-linked (GlcNAc...) asparagine glycans are attached at residues Asn-9 and Asn-27. A helical transmembrane segment spans residues 50–70; the sequence is VVYVPIFVVGVIGNVLVCLVI. Topologically, residues 71-82 are cytoplasmic; the sequence is LQHQAMKTPTNY. Residues 83–103 form a helical membrane-spanning segment; it reads YLFSLAVSDLLVLLLGMPLEV. The Extracellular portion of the chain corresponds to 104-123; that stretch reads YEMWRNYPFLFGPVGCYFKT. Cys-119 and Cys-204 form a disulfide bridge. The chain crosses the membrane as a helical span at residues 124–146; the sequence is ALFETVCFASILSITTVSVERYV. The Cytoplasmic portion of the chain corresponds to 147–165; that stretch reads AILHPFRAKLQSTRRRALR. Residues 166 to 186 form a helical membrane-spanning segment; that stretch reads ILGIVWGFSVLFSLPNTSIHG. Residues 187 to 214 lie on the Extracellular side of the membrane; that stretch reads IKFHYFPNGSLVPGSATCTVIKPMWIYN. The N-linked (GlcNAc...) asparagine glycan is linked to Asn-194. The chain crosses the membrane as a helical span at residues 215-235; that stretch reads FIIQVTSFLFYLLPMTVISVL. The Cytoplasmic segment spans residues 236-265; the sequence is YYLMALRLKKDKSLEADEGNANIQRPCRKS. A helical transmembrane segment spans residues 266–286; sequence VNKMLFVLVLVFAICWAPFHI. Residues 287–301 are Extracellular-facing; sequence DRLFFSFVEEWSESL. The chain crosses the membrane as a helical span at residues 302-322; that stretch reads AAVFNLVHVVSGVFFYLSSAV. Residues 323–415 are Cytoplasmic-facing; it reads NPIIYNLLSR…NYQSFHFNKT (93 aa).

The protein belongs to the G-protein coupled receptor 1 family. In terms of tissue distribution, predominantly expressed in the CNS, particularly in the medulla oblongata, pontine reticular formation, spinal cord, and thalamus. High level in testis whereas lower levels are present in a variety of peripheral tissues including the gastrointestinal tract, genitourinary tract, liver, pancreas, adrenal gland, thyroid gland, lung, trachea, spleen and thymus.

It is found in the cell membrane. Functionally, receptor for the neuromedin-U and neuromedin-S neuropeptides. The protein is Neuromedin-U receptor 2 (NMUR2) of Homo sapiens (Human).